Reading from the N-terminus, the 154-residue chain is Low molecular weight protein-tyrosine-phosphatase PtpA (154 aa).

The Nucleophile role is filled by Cys-8. Arg-14 is a catalytic residue. Asp-120 (proton donor) is an active-site residue.

Belongs to the low molecular weight phosphotyrosine protein phosphatase family.

It catalyses the reaction O-phospho-L-tyrosyl-[protein] + H2O = L-tyrosyl-[protein] + phosphate. Functionally, dephosphorylates the phosphotyrosine-containing proteins. The sequence is that of Low molecular weight protein-tyrosine-phosphatase PtpA (ptpA) from Staphylococcus saprophyticus subsp. saprophyticus (strain ATCC 15305 / DSM 20229 / NCIMB 8711 / NCTC 7292 / S-41).